The following is a 279-amino-acid chain: Cholesterol 25-hydroxylase-like protein 2 (279 aa).

N-linked (GlcNAc...) asparagine glycosylation is found at Asn6 and Asn13. 3 membrane-spanning segments follow: residues 36-56 (LFPVILSVSMYLVLVFFYTVL), 86-106 (LALTTYNHLLYIFPAAVAQWL), and 120-140 (LTAFLLGIVGCTVVFDFQYYL). Positions 128 to 262 (VGCTVVFDFQ…FAHWDWLGGT (135 aa)) constitute a Fatty acid hydroxylase domain. The short motif at 141–145 (WHLLH) is the Histidine box-1 element. A Histidine box-2 motif is present at residues 156–160 (HALHH). 2 membrane-spanning segments follow: residues 165–185 (TFSLVTQYLSAWELFSVGFWT) and 189–209 (PLLLQCHCLTAWAFMLFNIWV). The Histidine box-3 motif lies at 237-243 (RHDAHHQ).

This sequence belongs to the sterol desaturase family. Fe cation serves as cofactor.

Its subcellular location is the endoplasmic reticulum membrane. May catalyze the formation of 25-hydroxycholesterol from cholesterol. This is Cholesterol 25-hydroxylase-like protein 2 from Danio rerio (Zebrafish).